The primary structure comprises 413 residues: Type II methyltransferase M.NaeI (413 aa).

The SAM-dependent MTase C5-type domain occupies 4–317 (LEVVEICAGA…KRIRAALNME (314 aa)). Cys-78 is an active-site residue.

Belongs to the class I-like SAM-binding methyltransferase superfamily. C5-methyltransferase family.

It catalyses the reaction a 2'-deoxycytidine in DNA + S-adenosyl-L-methionine = a 5-methyl-2'-deoxycytidine in DNA + S-adenosyl-L-homocysteine + H(+). Functionally, a methylase that recognizes the double-stranded sequence 5'-GCCGGC-3', methylates C-? on both strands, and protects the DNA from cleavage by the NaeI endonuclease. The polypeptide is Type II methyltransferase M.NaeI (Lentzea aerocolonigenes (Lechevalieria aerocolonigenes)).